The sequence spans 196 residues: Holliday junction branch migration complex subunit RuvA (196 aa).

Residues 1–63 (MIEYIKGEIV…EDAHLLFGFA (63 aa)) are domain I. A domain II region spans residues 64–142 (EKIERELFLL…PMESMAGNLP (79 aa)). The flexible linker stretch occupies residues 142–146 (PEASV). The segment at 147–196 (SNGAVTEEAVAALVMLGFQKAASQKAVSAILKGSPTLAVEQVIKTALRML) is domain III.

The protein belongs to the RuvA family. Homotetramer. Forms an RuvA(8)-RuvB(12)-Holliday junction (HJ) complex. HJ DNA is sandwiched between 2 RuvA tetramers; dsDNA enters through RuvA and exits via RuvB. An RuvB hexamer assembles on each DNA strand where it exits the tetramer. Each RuvB hexamer is contacted by two RuvA subunits (via domain III) on 2 adjacent RuvB subunits; this complex drives branch migration. In the full resolvosome a probable DNA-RuvA(4)-RuvB(12)-RuvC(2) complex forms which resolves the HJ.

It is found in the cytoplasm. In terms of biological role, the RuvA-RuvB-RuvC complex processes Holliday junction (HJ) DNA during genetic recombination and DNA repair, while the RuvA-RuvB complex plays an important role in the rescue of blocked DNA replication forks via replication fork reversal (RFR). RuvA specifically binds to HJ cruciform DNA, conferring on it an open structure. The RuvB hexamer acts as an ATP-dependent pump, pulling dsDNA into and through the RuvAB complex. HJ branch migration allows RuvC to scan DNA until it finds its consensus sequence, where it cleaves and resolves the cruciform DNA. This chain is Holliday junction branch migration complex subunit RuvA, found in Parabacteroides distasonis (strain ATCC 8503 / DSM 20701 / CIP 104284 / JCM 5825 / NCTC 11152).